We begin with the raw amino-acid sequence, 138 residues long: Basic phospholipase A2 homolog ammodytin L (138 aa).

Residues 1 to 16 (MRILWIVAVCLIGVEG) form the signal peptide. Cystine bridges form between Cys-42/Cys-131, Cys-44/Cys-60, Cys-59/Cys-111, Cys-65/Cys-138, Cys-66/Cys-104, Cys-73/Cys-97, and Cys-91/Cys-102. Residues 121–133 (KKYKVYLRFKCKG) form an important for membrane-damaging activities in eukaryotes and bacteria; heparin-binding region.

Belongs to the phospholipase A2 family. Group II subfamily. S49 sub-subfamily. In terms of tissue distribution, expressed by the venom gland.

The protein resides in the secreted. Functionally, snake venom phospholipase A2 homolog that lacks enzymatic activity. Is very active in inducing myonecrosis in vivo and shows a potent calcium-independent membrane-damaging activity in vitro, most probably by binding and incorporating in the membrane. Also acts as a presynaptic neurotoxin. A model of myotoxic mechanism has been proposed: an apo Lys49-PLA2 is activated by the entrance of a hydrophobic molecule (e.g. fatty acid) at the hydrophobic channel of the protein leading to a reorientation of a monomer. This reorientation causes a transition between 'inactive' to 'active' states, causing alignment of C-terminal and membrane-docking sites (MDoS) side-by-side and putting the membrane-disruption sites (MDiS) in the same plane, exposed to solvent and in a symmetric position for both monomers. The MDoS region stabilizes the toxin on membrane by the interaction of charged residues with phospholipid head groups. Subsequently, the MDiS region destabilizes the membrane with penetration of hydrophobic residues. This insertion causes a disorganization of the membrane, allowing an uncontrolled influx of ions (i.e. calcium and sodium), and eventually triggering irreversible intracellular alterations and cell death. The protein is Basic phospholipase A2 homolog ammodytin L of Vipera ammodytes ammodytes (Western sand viper).